Reading from the N-terminus, the 903-residue chain is Protein translocase subunit SecA (903 aa).

ATP contacts are provided by residues Gln-87, 105-109, and Asp-512; that span reads GEGKT. Zn(2+) is bound by residues Cys-887, Cys-889, Cys-898, and His-899.

It belongs to the SecA family. As to quaternary structure, monomer and homodimer. Part of the essential Sec protein translocation apparatus which comprises SecA, SecYEG and auxiliary proteins SecDF-YajC and YidC. Zn(2+) is required as a cofactor.

The protein localises to the cell inner membrane. It localises to the cytoplasm. The enzyme catalyses ATP + H2O + cellular proteinSide 1 = ADP + phosphate + cellular proteinSide 2.. Part of the Sec protein translocase complex. Interacts with the SecYEG preprotein conducting channel. Has a central role in coupling the hydrolysis of ATP to the transfer of proteins into and across the cell membrane, serving both as a receptor for the preprotein-SecB complex and as an ATP-driven molecular motor driving the stepwise translocation of polypeptide chains across the membrane. In Photorhabdus laumondii subsp. laumondii (strain DSM 15139 / CIP 105565 / TT01) (Photorhabdus luminescens subsp. laumondii), this protein is Protein translocase subunit SecA.